The primary structure comprises 269 residues: Zinc finger protein SNAI2 (269 aa).

An SNAG domain region spans residues Met1 to Ser20. The interval Ser81–Lys117 is disordered. 4 consecutive C2H2-type zinc fingers follow at residues Phe129 to His151, Phe160 to His182, Cys186 to His208, and Phe214 to His236. Residues Tyr242–Cys265 form a C2H2-type 5; atypical zinc finger.

It belongs to the snail C2H2-type zinc-finger protein family. Interacts (via SNAG domain) with LIMD1 (via LIM domains), WTIP (via LIM domains) and AJUBA (via LIM domains). Interacts (via zinc fingers) with KPNA2, KPNB1, and TNPO1. May interact (via zinc fingers) with IPO7. Phosphorylated by GSK3B. Once phosphorylated, it becomes a target for ubiquitination. Post-translationally, ubiquitinated by the SCF(FBXO11) complex; ubiquitination requires previous GSK3B-mediated SNAI2 phosphorylation.

The protein resides in the nucleus. It is found in the cytoplasm. Transcriptional repressor that modulates both activator-dependent and basal transcription. Involved in the generation and migration of neural crest cells. Plays a role in mediating RAF1-induced transcriptional repression of the TJ protein, occludin (OCLN) and subsequent oncogenic transformation of epithelial cells. Represses BRCA2 expression by binding to its E2-box-containing silencer and recruiting CTBP1 and HDAC1 in breast cells. In epidermal keratinocytes, binds to the E-box in ITGA3 promoter and represses its transcription. Involved in the regulation of ITGB1 and ITGB4 expression and cell adhesion and proliferation in epidermal keratinocytes. Binds to E-box2 domain of BSG and activates its expression during TGFB1-induced epithelial-mesenchymal transition (EMT) in hepatocytes. Represses E-Cadherin/CDH1 transcription via E-box elements. Involved in osteoblast maturation. Binds to RUNX2 and SOC9 promoters and may act as a positive and negative transcription regulator, respectively, in osteoblasts. Binds to CXCL12 promoter via E-box regions in mesenchymal stem cells and osteoblasts. Plays an essential role in TWIST1-induced EMT and its ability to promote invasion and metastasis. This is Zinc finger protein SNAI2 (Snai2) from Mus musculus (Mouse).